The primary structure comprises 182 residues: Ribosome-recycling factor (182 aa).

The protein belongs to the RRF family.

Its subcellular location is the cytoplasm. Responsible for the release of ribosomes from messenger RNA at the termination of protein biosynthesis. May increase the efficiency of translation by recycling ribosomes from one round of translation to another. This is Ribosome-recycling factor from Prochlorococcus marinus (strain MIT 9312).